We begin with the raw amino-acid sequence, 366 residues long: Cell division protein FtsZ 1 (366 aa).

Residues 45 to 49 (GAGCN), 132 to 134 (GTG), Glu163, Arg167, and Asp210 each bind GTP. Over residues 344–354 (PEEETPLETPE) the composition is skewed to acidic residues. The segment at 344 to 366 (PEEETPLETPEESPSIEISIPEL) is disordered. Over residues 355–366 (ESPSIEISIPEL) the composition is skewed to low complexity.

Belongs to the FtsZ family. In terms of assembly, homodimer. Polymerizes to form a dynamic ring structure in a strictly GTP-dependent manner. Interacts directly with several other division proteins.

It is found in the cytoplasm. Essential cell division protein that forms a contractile ring structure (Z ring) at the future cell division site. The regulation of the ring assembly controls the timing and the location of cell division. One of the functions of the FtsZ ring is to recruit other cell division proteins to the septum to produce a new cell wall between the dividing cells. Binds GTP and shows GTPase activity. This chain is Cell division protein FtsZ 1, found in Pyrococcus woesei.